Reading from the N-terminus, the 296-residue chain is MTDLLTLEPTQTILTGSKKTNFGYLESTDGVINFSIVKNIILNGHHHGNVLYVIRNYASKAVCEKLAKNFDYRVTQSGGNRADDGFVLTNQIGATQFSRNGEQYIHEVNRVNQSVADLMKATSAEDSESLFLNLTLEKEFLERGIHFGPARFKNGYACFATFRRWLDNGVMSLMPHEDMAQVDFAKEDGFEIANTQTVTAYNVCLEAAQGGGQLKIWNLIPDQVCRETLGVTRTGYPYPPHLLNETESLSVQLNAGDLYFMNACHLHGVSSVSEGSRLTAGRFIGKLNDRKVVYWT.

Positions 176, 178, and 267 each coordinate Fe cation.

The protein belongs to the iron/ascorbate-dependent oxidoreductase family. Requires L-ascorbate as cofactor. The cofactor is Fe(2+).

The catalysed reaction is L-isoleucine + 2-oxoglutarate + O2 = 3(1)-hydroxy-L-isoleucine + succinate + CO2. Its function is as follows. Catalyzes the hydroxylation of L-isoleucine at the C-4' position to form L-4'-hydroxyisoleucine (4'-HIL). Exhibits low activity with L-valine and L-methionine. This Pantoea ananatis (strain AJ13355) protein is L-isoleucine 3(1)-dioxygenase.